Reading from the N-terminus, the 504-residue chain is MEQFQVYLELNRSRRHDFLYPLIFRESIYALAHGHGLNKSMIFFENQGYGNKFSSLIVKRLILRMDQQKRLISSANDSNQNPVFGHNNNLYSQMVAAGFAVIVEIPFSLRLISYSQGAEVAKSHNLQSIHSIFPFLEDKLSHLNYVLEALIPHPIHLEILVQALRYWVKDASSLHLLRFSLYEYCNLKSFITPKKSISIFNPRLFLFLYNSHACEYEFIFLFLRNQSSHLRSTSSGVFLERIFFYGKIKYLGEVFYNDFQNNLWLFKDPFIHFIRYQGKSILASKDTSLLINKWKYYFVDLWQYYFYLWSQSGRVRINQLSKYSLDFLGYLSSVRLNPSVVRSQMLENSFLIDNAMKTLDTRIPIISLIGSLSKAKFCNTLGHPISKPTWADSPDSDIIDRFVRICRNLSHYHSGSSKKKSLYRIKYILRFSCVKTLARKHKSTVRAFLKKLGSEFLEEFFTETEEEHAFSLIFPRGFFALRKFDRGRIWYLDIICIDALVNHS.

Belongs to the intron maturase 2 family. MatK subfamily.

The protein resides in the plastid. The protein localises to the chloroplast. In terms of biological role, usually encoded in the trnK tRNA gene intron. Probably assists in splicing its own and other chloroplast group II introns. In Kokia drynarioides (Hawaiian tree cotton), this protein is Maturase K.